We begin with the raw amino-acid sequence, 504 residues long: ATP synthase subunit alpha 2 (504 aa).

An ATP-binding site is contributed by Gly169–Thr176.

It belongs to the ATPase alpha/beta chains family. As to quaternary structure, F-type ATPases have 2 components, CF(1) - the catalytic core - and CF(0) - the membrane proton channel. CF(1) has five subunits: alpha(3), beta(3), gamma(1), delta(1), epsilon(1). CF(0) has three main subunits: a(1), b(2) and c(9-12). The alpha and beta chains form an alternating ring which encloses part of the gamma chain. CF(1) is attached to CF(0) by a central stalk formed by the gamma and epsilon chains, while a peripheral stalk is formed by the delta and b chains.

It localises to the cell membrane. It carries out the reaction ATP + H2O + 4 H(+)(in) = ADP + phosphate + 5 H(+)(out). Produces ATP from ADP in the presence of a proton gradient across the membrane. The alpha chain is a regulatory subunit. This Listeria monocytogenes serotype 4b (strain F2365) protein is ATP synthase subunit alpha 2.